A 778-amino-acid chain; its full sequence is Endonuclease MutS2 (778 aa).

328 to 335 (GPNTGGKT) lines the ATP pocket. The 76-residue stretch at 702–777 (LDLRGKRYEE…GSGATIVTFK (76 aa)) folds into the Smr domain.

Belongs to the DNA mismatch repair MutS family. MutS2 subfamily. In terms of assembly, homodimer. Binds to stalled ribosomes, contacting rRNA.

In terms of biological role, endonuclease that is involved in the suppression of homologous recombination and thus may have a key role in the control of bacterial genetic diversity. Functionally, acts as a ribosome collision sensor, splitting the ribosome into its 2 subunits. Detects stalled/collided 70S ribosomes which it binds and splits by an ATP-hydrolysis driven conformational change. Acts upstream of the ribosome quality control system (RQC), a ribosome-associated complex that mediates the extraction of incompletely synthesized nascent chains from stalled ribosomes and their subsequent degradation. Probably generates substrates for RQC. This Streptococcus pneumoniae (strain Hungary19A-6) protein is Endonuclease MutS2.